We begin with the raw amino-acid sequence, 283 residues long: MTARQIQLGDITFANDRPFALLGGVNVLEDLDFALRCAGHYKQVCERLGIPLVFKASYDKANRSSIHSFRGPGLEAGLQILQAVKDTLGIPVITDVHSPEEAKAAAKVADIIQLPAFLARQTDLVRAMAETGAVINIKKPQFLSPEQIRNIVDKFRECGNEQLLICERGTNFGYDNLVVDMLGFGVMKRTCDDLPLIFDVTHALQCRDPGGAASGGRRSQVVDLAKAGMAVGLAGLFLEAHPDPNQARCDGPSALPLDQLEPFLTQVKAIDDLVKSQPMININ.

It belongs to the KdsA family.

Its subcellular location is the cytoplasm. The enzyme catalyses D-arabinose 5-phosphate + phosphoenolpyruvate + H2O = 3-deoxy-alpha-D-manno-2-octulosonate-8-phosphate + phosphate. The protein operates within carbohydrate biosynthesis; 3-deoxy-D-manno-octulosonate biosynthesis; 3-deoxy-D-manno-octulosonate from D-ribulose 5-phosphate: step 2/3. It functions in the pathway bacterial outer membrane biogenesis; lipopolysaccharide biosynthesis. The polypeptide is 2-dehydro-3-deoxyphosphooctonate aldolase (Parasynechococcus marenigrum (strain WH8102)).